The primary structure comprises 858 residues: DNA mismatch repair protein MutS (858 aa).

Position 618–625 (618–625 (GPNMGGKS)) interacts with ATP.

Belongs to the DNA mismatch repair MutS family.

Functionally, this protein is involved in the repair of mismatches in DNA. It is possible that it carries out the mismatch recognition step. This protein has a weak ATPase activity. The chain is DNA mismatch repair protein MutS from Shewanella woodyi (strain ATCC 51908 / MS32).